We begin with the raw amino-acid sequence, 597 residues long: MGHRIPEETIEAIRRGVDIVDVIGEYVQLKRQGRNYFGLCPFHGEKTPSFSVSPEKQIFHCFGCGAGGNAFTFLMDIEGIPFVEAAKRLAAKAGVDLSVYELDVRGRDDGQTDEAKAMTEAHALLKRFYHHLLVHTKEGQAALDYLQARGWTKETIDRFEIGYAPDAPDAAAKLLESHSFSLPVMEKAGLLTKKEDGRYVGRFRNRIMFPIHDHRGETVGFSGRLLGEGHPKYVNSPETPVFRKGAILYHFHAARVPIRKRQEALLVEGFADVISAAQAGIDYAIATMGTSLTEEQARILRPCDTITICYDGDRAGIEAAWAAAEQLSALGCRVKVASLPNGLDPDEYIRVYGGERFAGEAGCRRPLVAFKMAYLRRGKNLQHEGERLRYIDEALREIGKLSSPVEQDYYLRQLAEEFSLSLSALHEQLSRSQRERTKPREAPDGETARPMLAKKLLPAFQNAERLLLAHMMRSRDVALVVQERIGGRFNIEEHRALAAYIYAFYEEGHEADPGALISRIPGELQPLASDVSLLLIADDVSEQELEDYIRHVLNRPKWLMLKVKEQEKTEAERRKDFLTAARIAKEMIEMKKMLSSS.

Zn(2+) contacts are provided by C40, H43, C61, and C64. The CHC2-type zinc-finger motif lies at 40 to 64 (CPFHGEKTPSFSVSPEKQIFHCFGC). In terms of domain architecture, Toprim spans 262–342 (QEALLVEGFA…RVKVASLPNG (81 aa)). Mg(2+)-binding residues include E268, D311, and D313. A compositionally biased stretch (basic and acidic residues) spans 429–447 (LSRSQRERTKPREAPDGET). The tract at residues 429 to 448 (LSRSQRERTKPREAPDGETA) is disordered.

It belongs to the DnaG primase family. As to quaternary structure, monomer. Interacts with replicative helicase DnaB, as DnaB(6):DnaG(3). A stable complex DnaI(6):DnaB(6):DnaG(3) fragment can be isolated; DnaI and DnaG do not contact each other (DnaI in this complex is derived from B.subtilis). Requires Zn(2+) as cofactor. It depends on Mg(2+) as a cofactor.

The catalysed reaction is ssDNA + n NTP = ssDNA/pppN(pN)n-1 hybrid + (n-1) diphosphate.. Functionally, RNA polymerase that catalyzes the synthesis of short RNA molecules used as primers for DNA polymerase during DNA replication. In Geobacillus stearothermophilus (Bacillus stearothermophilus), this protein is DNA primase.